A 115-amino-acid polypeptide reads, in one-letter code: MRIKVGETVAILAGKDRYFIDENGQRKVKTGKVLKIFNEKQRIIVEGVNMKTKHHPPSKDQEKGSITKQEGSIHISNVALIDPKTQTPTKIGIRFKKGKKIRYAKKSNNQLDDIV.

The disordered stretch occupies residues 49-68 (NMKTKHHPPSKDQEKGSITK).

The protein belongs to the universal ribosomal protein uL24 family. As to quaternary structure, part of the 50S ribosomal subunit.

In terms of biological role, one of two assembly initiator proteins, it binds directly to the 5'-end of the 23S rRNA, where it nucleates assembly of the 50S subunit. One of the proteins that surrounds the polypeptide exit tunnel on the outside of the subunit. This is Large ribosomal subunit protein uL24 from Phytoplasma australiense.